The chain runs to 101 residues: Small ribosomal subunit protein uS14 (101 aa).

Belongs to the universal ribosomal protein uS14 family. In terms of assembly, part of the 30S ribosomal subunit. Contacts proteins S3 and S10.

In terms of biological role, binds 16S rRNA, required for the assembly of 30S particles and may also be responsible for determining the conformation of the 16S rRNA at the A site. The chain is Small ribosomal subunit protein uS14 from Cupriavidus pinatubonensis (strain JMP 134 / LMG 1197) (Cupriavidus necator (strain JMP 134)).